The following is a 362-amino-acid chain: Sulfate/thiosulfate import ATP-binding protein CysA (362 aa).

The ABC transporter domain maps to 3–237; sequence IEINNISKYF…PASRFVMEFL (235 aa). Position 35-42 (35-42) interacts with ATP; it reads GPSGSGKT.

This sequence belongs to the ABC transporter superfamily. Sulfate/tungstate importer (TC 3.A.1.6) family. In terms of assembly, the complex is composed of two ATP-binding proteins (CysA), two transmembrane proteins (CysT and CysW) and a solute-binding protein (CysP).

It is found in the cell inner membrane. The enzyme catalyses sulfate(out) + ATP + H2O = sulfate(in) + ADP + phosphate + H(+). It catalyses the reaction thiosulfate(out) + ATP + H2O = thiosulfate(in) + ADP + phosphate + H(+). In terms of biological role, part of the ABC transporter complex CysAWTP involved in sulfate/thiosulfate import. Responsible for energy coupling to the transport system. The polypeptide is Sulfate/thiosulfate import ATP-binding protein CysA (Photorhabdus laumondii subsp. laumondii (strain DSM 15139 / CIP 105565 / TT01) (Photorhabdus luminescens subsp. laumondii)).